We begin with the raw amino-acid sequence, 1037 residues long: MANYFIDRPVFAWVLAIIMMLAGGLAIMNLPVAQYPQIAPPTITVSATYPGADAQTVEDSVTQVIEQNMNGLDGLMYMSSTSDAAGNASITLTFETGTSPDIAQVQVQNKLQLAMPSLPEAVQQQGISVDKSSSNILMVAAFISDNGSLNQYDIADYVASNIKDPLSRTAGVGSVQLFGSEYAMRIWLDPQKLNKYNLVPSDVISQIKVQNNQISGGQLGGMPQAADQQLNASIIVQTRLQTPEEFGKILLKVQQDGSQVLLRDVARVELGAEDYSTVARYNGKPAAGIAIKLATGANALDTSRAVKEELNRLSAYFPASLKTVYPYDTTPFIKISIQEVFKTLVEAIILVFLVMYLFLQNFRATIIPTIAVPVVILGTFAILSAVGFTINTLTMFGMVLAIGLLVDDAIVVVENVERVIAEDKLPPKEATHKSMGQIQRALVGIAVVLSAVFMPMAFMSGATGEIYRQFSITLISSMLLSVFVAMSLTPALCATILKAAPEGGHKPNALFARFNTLFEKSTQHYTDSTRSLLRCTGRYMVVYLLICAGMAVLFLRTPTSFLPEEDQGVFMTTAQLPSGATMVNTTKVLQQVTDYYLTKEKNNVQSVFTVGGFGFSGQGQNNGLAFISLKPWSERVGEENSVTAIIQRAMIALSSINKAVVFPFNLPAVAELGTASGFDMELLDNGNLGHEKLTQARNELLSLAAQSPNQVIGVRPNGLEDTPMFKVNVNAAKAEAMGVALSDINQTISTAFGSSYVNDFLNQGRVKKVYVQAGTPFRMLPDNINQWYVRNASGTMAPLSAYSSTEWTYGSPRLERYNGIPSMEILGEAAAGKSTGDAMKFMADLVAKLPAGVGYSWTGLSYQEALSSNQAPALYAISLVVVFLALAALYESWSIPFSVMLVVPLGVVGALLATDLRGLSNDVYFQVGLLTTIGLSAKNAILIVEFAVEMMQKEGKTPVEAIIEAARMRLRPILMTSLAFILGVLPLVISHGAGSGAQNAVGTGVMGGMFAATVLAIYFVPVFFVVVEHLFARFKKA.

Residues 1-9 (MANYFIDRP) lie on the Cytoplasmic side of the membrane. A helical transmembrane segment spans residues 10-30 (VFAWVLAIIMMLAGGLAIMNL). The Periplasmic segment spans residues 31–338 (PVAQYPQIAP…TTPFIKISIQ (308 aa)). The chain crosses the membrane as a helical span at residues 339–359 (EVFKTLVEAIILVFLVMYLFL). Residues 360-369 (QNFRATIIPT) are Cytoplasmic-facing. The chain crosses the membrane as a helical span at residues 370–390 (IAVPVVILGTFAILSAVGFTI). The Periplasmic portion of the chain corresponds to 391–392 (NT). Residues 393–413 (LTMFGMVLAIGLLVDDAIVVV) traverse the membrane as a helical segment. Residues 414–440 (ENVERVIAEDKLPPKEATHKSMGQIQR) are Cytoplasmic-facing. The chain crosses the membrane as a helical span at residues 441–461 (ALVGIAVVLSAVFMPMAFMSG). Residues 462-471 (ATGEIYRQFS) lie on the Periplasmic side of the membrane. A helical transmembrane segment spans residues 472–492 (ITLISSMLLSVFVAMSLTPAL). Residues 493 to 534 (CATILKAAPEGGHKPNALFARFNTLFEKSTQHYTDSTRSLLR) lie on the Cytoplasmic side of the membrane. A helical membrane pass occupies residues 535–555 (CTGRYMVVYLLICAGMAVLFL). The Periplasmic segment spans residues 556–870 (RTPTSFLPEE…SYQEALSSNQ (315 aa)). Residues 871-891 (APALYAISLVVVFLALAALYE) form a helical membrane-spanning segment. Residue serine 892 is a topological domain, cytoplasmic. Residues 893-913 (WSIPFSVMLVVPLGVVGALLA) form a helical membrane-spanning segment. The Periplasmic portion of the chain corresponds to 914–927 (TDLRGLSNDVYFQV). Residues 928 to 948 (GLLTTIGLSAKNAILIVEFAV) traverse the membrane as a helical segment. The Cytoplasmic segment spans residues 949-972 (EMMQKEGKTPVEAIIEAARMRLRP). A helical transmembrane segment spans residues 973 to 993 (ILMTSLAFILGVLPLVISHGA). Over 994-1006 (GSGAQNAVGTGVM) the chain is Periplasmic. The helical transmembrane segment at 1007 to 1027 (GGMFAATVLAIYFVPVFFVVV) threads the bilayer. Residues 1028-1037 (EHLFARFKKA) are Cytoplasmic-facing.

Belongs to the resistance-nodulation-cell division (RND) (TC 2.A.6) family. In terms of assembly, homotrimer. Part of the tripartite efflux system MdtEF-TolC, which is composed of an inner membrane transporter, MdtF, a membrane fusion protein, MdtE, and an outer membrane component, TolC. The complex forms a large protein conduit and can translocate molecules across both the inner and outer membranes.

The protein localises to the cell inner membrane. Functionally, part of the tripartite efflux system MdtEF-TolC, which confers resistance to various compounds. In Escherichia coli O6:H1 (strain CFT073 / ATCC 700928 / UPEC), this protein is Multidrug resistance protein MdtF (mdtF).